We begin with the raw amino-acid sequence, 485 residues long: Cysteine protease atg4da (485 aa).

Residues 22 to 46 (ASASSKRHLGHGAVPDGIREGSGEP) form a disordered region. Residue C131 is the Nucleophile of the active site. Catalysis depends on residues D368 and H370.

Belongs to the peptidase C54 family.

It localises to the cytoplasm. The enzyme catalyses [protein]-C-terminal L-amino acid-glycyl-phosphatidylethanolamide + H2O = [protein]-C-terminal L-amino acid-glycine + a 1,2-diacyl-sn-glycero-3-phosphoethanolamine. It catalyses the reaction [protein]-C-terminal L-amino acid-glycyl-phosphatidylserine + H2O = [protein]-C-terminal L-amino acid-glycine + a 1,2-diacyl-sn-glycero-3-phospho-L-serine. Its function is as follows. Cysteine protease that plays a key role in autophagy by mediating both proteolytic activation and delipidation of ATG8 family proteins. The protease activity is required for proteolytic activation of ATG8 family proteins to reveal a C-terminal glycine. Exposure of the glycine at the C-terminus is essential for ATG8 proteins conjugation to phosphatidylethanolamine (PE) and insertion to membranes, which is necessary for autophagy. In addition to the protease activity, also mediates delipidation of ATG8 family proteins. Catalyzes delipidation of PE-conjugated forms of ATG8 proteins during macroautophagy. Also involved in non-canonical autophagy, a parallel pathway involving conjugation of ATG8 proteins to single membranes at endolysosomal compartments, by catalyzing delipidation of ATG8 proteins conjugated to phosphatidylserine (PS). ATG4D plays a role in the autophagy-mediated neuronal homeostasis in the central nervous system. The protein is Cysteine protease atg4da of Danio rerio (Zebrafish).